The following is a 734-amino-acid chain: Rho GTPase-activating protein gacL (734 aa).

One can recognise a Rho-GAP domain in the interval 141-339 (ISLDTLIAKE…QMILHYDTLF (199 aa)). WD repeat units lie at residues 381–430 (GHNK…FIKE), 539–579 (LFMK…TIHQ), and 585–623 (KRPKRMACIEIDDTEYIWIGGDEGSIQIFNSKTFKLEHK).

The protein localises to the cytoplasm. Functionally, rho GTPase-activating protein involved in the signal transduction pathway. The sequence is that of Rho GTPase-activating protein gacL (gacL) from Dictyostelium discoideum (Social amoeba).